The following is an 88-amino-acid chain: Small ribosomal subunit protein bS16c (88 aa).

Belongs to the bacterial ribosomal protein bS16 family.

Its subcellular location is the plastid. It is found in the chloroplast. In Oenothera elata subsp. hookeri (Hooker's evening primrose), this protein is Small ribosomal subunit protein bS16c.